The primary structure comprises 444 residues: D(2) dopamine receptor (444 aa).

Topologically, residues 1–37 (MDPLNLSWYDDDLERQNWSRPFNGSEGKPDRPHYNYY) are extracellular. Asparagine 5, asparagine 17, and asparagine 23 each carry an N-linked (GlcNAc...) asparagine glycan. Residues 38–60 (AMLLTLLIFIIVFGNVLVCMAVS) traverse the membrane as a helical segment. Residues 61 to 70 (REKALQTTTN) lie on the Cytoplasmic side of the membrane. A helical transmembrane segment spans residues 71-93 (YLIVSLAVADLLVATLVMPWVVY). At 94–108 (LEVVGEWKFSRIHCD) the chain is on the extracellular side. A disulfide bridge connects residues cysteine 107 and cysteine 182. The chain crosses the membrane as a helical span at residues 109-130 (IFVTLDVMMCTASILNLCAISI). At 131-151 (DRYTAVAMPMLYNTRYSSKRR) the chain is on the cytoplasmic side. A helical transmembrane segment spans residues 152-172 (VTVMIAIVWVLSFTISCPLLF). Residues 173 to 188 (GLNNTDQNECIIANPA) lie on the Extracellular side of the membrane. Residues 189–213 (FVVYSSIVSFYVPFIVTLLVYIKIY) traverse the membrane as a helical segment. The segment at 211-374 (KIYIVLRKRR…SQQKEKKATQ (164 aa)) is interaction with PPP1R9B. At 214-374 (IVLRKRRKRV…SQQKEKKATQ (161 aa)) the chain is on the cytoplasmic side. The tract at residues 282–329 (EMLSSTSPPERTRYSPIPPSHHQLTLPDPSHHGLHSNPDSPAKPEKNG) is disordered. The helical transmembrane segment at 375 to 396 (MLAIVLGVFIICWLPFFITHIL) threads the bilayer. The Extracellular segment spans residues 397–410 (NIHCDCNIPPVLYS). The cysteines at positions 400 and 402 are disulfide-linked. Residues 411–432 (AFTWLGYVNSAVNPIIYTTFNI) form a helical membrane-spanning segment. Over 433–444 (EFRKAFMKILHC) the chain is Cytoplasmic. Cysteine 444 carries the S-palmitoyl cysteine lipid modification.

Belongs to the G-protein coupled receptor 1 family. As to quaternary structure, forms homo- and heterooligomers with DRD4. The interaction with DRD4 may modulate agonist-induced downstream signaling. Interacts with CADPS and CADPS2. Interacts with GPRASP1, PPP1R9B and CLIC6. Interacts with ARRB2. Interacts with HTR2A. Interacts with DRD1. Interacts with KCNA2. In terms of processing, palmitoylated. Palmitoylation which is required for proper localization to the plasma membrane and stability of the receptor could be carried on by ZDHHC4, ZDHHC3 and ZDHHC8. Expressed in retinal hyaloid vessels at postnatal day 6. In terms of tissue distribution, expressed in the pituitary gland, stratum, brain stem and cortex. As to expression, expressed in the brain stem.

The protein localises to the cell membrane. The protein resides in the golgi apparatus membrane. Dopamine receptor whose activity is mediated by G proteins which inhibit adenylyl cyclase. Positively regulates postnatal regression of retinal hyaloid vessels via suppression of VEGFR2/KDR activity, downstream of OPN5. The sequence is that of D(2) dopamine receptor (Drd2) from Mus musculus (Mouse).